Reading from the N-terminus, the 198-residue chain is Beta-crystallin A1 (198 aa).

The tract at residues 1-13 (MAQINPLPVPLGP) is N-terminal arm. Beta/gamma crystallin 'Greek key' domains lie at 14 to 53 (WKIT…KVEC) and 54 to 100 (GGWI…RPIC). The interval 101 to 106 (SANHKE) is connecting peptide. Beta/gamma crystallin 'Greek key' domains are found at residues 107–148 (SKLV…KVQC) and 149–197 (GSWV…RRIQ).

This sequence belongs to the beta/gamma-crystallin family. In terms of assembly, homo/heterodimer, or complexes of higher-order. The structure of beta-crystallin oligomers seems to be stabilized through interactions between the N-terminal arms.

Its function is as follows. Crystallins are the dominant structural components of the vertebrate eye lens. The chain is Beta-crystallin A1 from Rana temporaria (European common frog).